The sequence spans 362 residues: Dual-specificity RNA methyltransferase RlmN (362 aa).

Glu-91 acts as the Proton acceptor in catalysis. A Radical SAM core domain is found at 97 to 333 (EDDRGTLCVS…VTTRKTRGED (237 aa)). Cys-104 and Cys-338 are joined by a disulfide. Residues Cys-111, Cys-115, and Cys-118 each coordinate [4Fe-4S] cluster. Residues 164-165 (GE), Ser-196, 218-220 (SLH), and Asn-295 contribute to the S-adenosyl-L-methionine site. Cys-338 acts as the S-methylcysteine intermediate in catalysis.

This sequence belongs to the radical SAM superfamily. RlmN family. Requires [4Fe-4S] cluster as cofactor.

The protein resides in the cytoplasm. It catalyses the reaction adenosine(2503) in 23S rRNA + 2 reduced [2Fe-2S]-[ferredoxin] + 2 S-adenosyl-L-methionine = 2-methyladenosine(2503) in 23S rRNA + 5'-deoxyadenosine + L-methionine + 2 oxidized [2Fe-2S]-[ferredoxin] + S-adenosyl-L-homocysteine. The catalysed reaction is adenosine(37) in tRNA + 2 reduced [2Fe-2S]-[ferredoxin] + 2 S-adenosyl-L-methionine = 2-methyladenosine(37) in tRNA + 5'-deoxyadenosine + L-methionine + 2 oxidized [2Fe-2S]-[ferredoxin] + S-adenosyl-L-homocysteine. Specifically methylates position 2 of adenine 2503 in 23S rRNA and position 2 of adenine 37 in tRNAs. m2A2503 modification seems to play a crucial role in the proofreading step occurring at the peptidyl transferase center and thus would serve to optimize ribosomal fidelity. This is Dual-specificity RNA methyltransferase RlmN from Methylobacillus flagellatus (strain ATCC 51484 / DSM 6875 / VKM B-1610 / KT).